The chain runs to 307 residues: tRNA pseudouridine synthase B (307 aa).

Catalysis depends on Asp45, which acts as the Nucleophile.

It belongs to the pseudouridine synthase TruB family. Type 1 subfamily.

It catalyses the reaction uridine(55) in tRNA = pseudouridine(55) in tRNA. Its function is as follows. Responsible for synthesis of pseudouridine from uracil-55 in the psi GC loop of transfer RNAs. This is tRNA pseudouridine synthase B from Heliobacterium mobile (Heliobacillus mobilis).